We begin with the raw amino-acid sequence, 649 residues long: Transcription factor tau 95 kDa subunit (649 aa).

The interval 1 to 21 is disordered; that stretch reads MPVEEPLATLSSIPDSSADQA. A compositionally biased stretch (polar residues) spans 9-19; sequence TLSSIPDSSAD. The stretch at 221 to 239 is repeat 1; it reads PSTDFQLPPPPKLSMVGFP. Residues 221–419 are 2 X repeats, Pro-rich; that stretch reads PSTDFQLPPP…PPLVFESDTP (199 aa). A Nuclear localization signal motif is present at residues 296-300; the sequence is AKKTK. Repeat 2 spans residues 400–419; that stretch reads PIVKKNVPKPPPLVFESDTP. Positions 556-612 are disordered; it reads IAAGDDFDDNGAITEEPDDAALENEEMDTDQNLKVPASIDDDVDDVDADEEEQESFD. 2 stretches are compositionally biased toward acidic residues: residues 560 to 584 and 594 to 610; these read DDFD…EMDT and IDDD…EQES. Serine 617 is modified (phosphoserine).

The protein belongs to the TFIIIC subunit 5 family. As to quaternary structure, component of the TFIIIC complex composed of TFC1, TFC3, TFC4, TFC6, TFC7 and TFC8. The subunits are organized in two globular domains, tauA and tauB, connected by a proteolysis-sensitive and flexible linker. Interacts with TFC3, TFC4 and TFC6.

It localises to the nucleus. TFIIIC mediates tRNA and 5S RNA gene activation by binding to intragenic promoter elements. Upstream of the transcription start site, TFIIIC assembles the initiation complex TFIIIB-TFIIIC-tDNA, which is sufficient for RNA polymerase III recruitment and function. Part of the tauA domain of TFIIIC that binds boxA DNA promoter sites of tRNA and similar genes. Participates in the interconnection of tauA with tauB via its contacts with TFC3 and TFC6. Serves as a scaffold critical for tauA-DNA spatial configuration and tauB-DNA stability. The sequence is that of Transcription factor tau 95 kDa subunit (TFC1) from Saccharomyces cerevisiae (strain ATCC 204508 / S288c) (Baker's yeast).